Here is a 295-residue protein sequence, read N- to C-terminus: Geranylfarnesyl diphosphate synthase (295 aa).

Residues Lys51, Arg54, and His83 each coordinate isopentenyl diphosphate. 2 residues coordinate Mg(2+): Asp90 and Asp94. An all-trans-polyprenyl diphosphate is bound at residue Arg99. Residue Arg100 coordinates isopentenyl diphosphate. The an all-trans-polyprenyl diphosphate site is built by Lys174, Thr175, and Gln212.

This sequence belongs to the FPP/GGPP synthase family. Homodimer. Mg(2+) is required as a cofactor.

The catalysed reaction is isopentenyl diphosphate + (2E,6E,10E)-geranylgeranyl diphosphate = (2E,6E,10E,14E)-geranylfarnesyl diphosphate + diphosphate. Its function is as follows. Involved in biosynthesis of the polyprenyl side-chain of methanophenazine, an electron carrier utilized for methanogenesis. Catalyzes the condensation of isopentenyl pyrophosphate with the allylic pyrophosphates to yield geranylfarnesyl diphosphate (GFPP). It prefers geranylgeranyl diphosphate (GGPP) and farnesyl diphosphate (FPP) as allylic substrate. In Methanosarcina mazei (strain ATCC BAA-159 / DSM 3647 / Goe1 / Go1 / JCM 11833 / OCM 88) (Methanosarcina frisia), this protein is Geranylfarnesyl diphosphate synthase.